The primary structure comprises 143 residues: Antiholin-like protein LrgA (143 aa).

Helical transmembrane passes span valine 6–isoleucine 26, leucine 30–leucine 50, leucine 61–isoleucine 81, and valine 97–leucine 117.

This sequence belongs to the CidA/LrgA family. LrgA subfamily.

It is found in the cell membrane. Functionally, inhibits the expression or activity of extracellular murein hydrolases by interacting, possibly with LrgB, with the holin-like protein CidA. The LrgAB and CidA proteins may affect the proton motive force of the membrane. May be involved in programmed cell death (PCD), possibly triggering PCD in response to antibiotics and environmental stresses. The chain is Antiholin-like protein LrgA from Bacillus cereus (strain AH187).